A 248-amino-acid chain; its full sequence is ATP synthase subunit a, chloroplastic (248 aa).

The next 5 helical transmembrane spans lie at 38 to 58 (QVLL…VLTV), 96 to 116 (VPFI…GALV), 135 to 155 (INTT…AGLA), 200 to 220 (LVVA…VMLL), and 221 to 241 (GLFT…AYIG).

The protein belongs to the ATPase A chain family. As to quaternary structure, F-type ATPases have 2 components, CF(1) - the catalytic core - and CF(0) - the membrane proton channel. CF(1) has five subunits: alpha(3), beta(3), gamma(1), delta(1), epsilon(1). CF(0) has four main subunits: a, b, b' and c.

The protein resides in the plastid. Its subcellular location is the chloroplast thylakoid membrane. In terms of biological role, key component of the proton channel; it plays a direct role in the translocation of protons across the membrane. This is ATP synthase subunit a, chloroplastic from Welwitschia mirabilis (Tree tumbo).